A 102-amino-acid polypeptide reads, in one-letter code: Small ribosomal subunit protein uS10 (102 aa).

It belongs to the universal ribosomal protein uS10 family. In terms of assembly, part of the 30S ribosomal subunit.

Involved in the binding of tRNA to the ribosomes. The polypeptide is Small ribosomal subunit protein uS10 (Methanothermobacter thermautotrophicus (strain ATCC 29096 / DSM 1053 / JCM 10044 / NBRC 100330 / Delta H) (Methanobacterium thermoautotrophicum)).